The chain runs to 63 residues: Large ribosomal subunit protein bL28 (63 aa).

Residues 1-22 (MSRRCAITGKSAMNGHSVSHAN) are disordered.

Belongs to the bacterial ribosomal protein bL28 family.

In Campylobacter hominis (strain ATCC BAA-381 / DSM 21671 / CCUG 45161 / LMG 19568 / NCTC 13146 / CH001A), this protein is Large ribosomal subunit protein bL28.